A 536-amino-acid polypeptide reads, in one-letter code: Putative UDP-glucuronosyltransferase ugt-47 (536 aa).

The signal sequence occupies residues 1–21; the sequence is MFRYHSILLLAILYFFEYGLA. 2 N-linked (GlcNAc...) asparagine glycosylation sites follow: N52 and N308. The chain crosses the membrane as a helical span at residues 497-517; sequence IIVPCFFVAFYFIIFPFFKLF.

Belongs to the UDP-glycosyltransferase family.

It localises to the membrane. The enzyme catalyses glucuronate acceptor + UDP-alpha-D-glucuronate = acceptor beta-D-glucuronoside + UDP + H(+). In Caenorhabditis elegans, this protein is Putative UDP-glucuronosyltransferase ugt-47 (ugt-47).